We begin with the raw amino-acid sequence, 371 residues long: Probable beta-1,3-galactosyltransferase 12 (371 aa).

The segment at 1-36 (MPLFSHRFTTASSSSPASPSYYNKPSSKTHKPNSSS) is disordered. Residues 11–36 (ASSSSPASPSYYNKPSSKTHKPNSSS) show a composition bias toward low complexity. The helical; Signal-anchor for type II membrane protein transmembrane segment at 46–66 (VAIIFFSLVSVFIGVAGTIFA) threads the bilayer. N-linked (GlcNAc...) asparagine glycosylation is present at Asn-291.

Belongs to the glycosyltransferase 31 family. Requires Mn(2+) as cofactor.

It is found in the golgi apparatus membrane. Its pathway is protein modification; protein glycosylation. Functionally, beta-1,3-galactosyltransferase that transfers galactose from UDP-galactose to substrates with a terminal glycosyl residue. The chain is Probable beta-1,3-galactosyltransferase 12 (B3GALT12) from Arabidopsis thaliana (Mouse-ear cress).